The chain runs to 137 residues: Global transcriptional regulator Spx (137 aa).

C10 and C13 are joined by a disulfide.

The protein belongs to the ArsC family. Spx subfamily. Interacts with the C-terminal domain of the alpha subunit of the RNAP.

The protein resides in the cytoplasm. Global transcriptional regulator that plays a key role in stress response and exerts either positive or negative regulation of genes. Acts by interacting with the C-terminal domain of the alpha subunit of the RNA polymerase (RNAP). This interaction can enhance binding of RNAP to the promoter region of target genes and stimulate their transcription, or block interaction of RNAP with activator. The chain is Global transcriptional regulator Spx from Streptococcus agalactiae serotype III (strain NEM316).